Reading from the N-terminus, the 263-residue chain is MLVIVLQGLAGFLSIIAILCQKRYNKLHRSIYGLSYDLFLLDFVGNGLYLYCALHYCYSSLVREQLSQRFPLFYPLNDARSIPISSFLILKDFCVSCCCMMVLRQLYYYRSTKHIYQGISITSIIIISVFLVLGIFTYGCSISNLPLKNSGKFGVFYLEHINYLWVMANLLKCFKYVPQMSINWMGCSTVGLSSKFALISFLAESIDLLGRLVIPTNALFYEIPFNSTPFWVKLIQFVTLLVILCQVQYVYVGRKPRLPKGKL.

The next 7 membrane-spanning stretches (helical) occupy residues 1-21 (MLVIVLQGLAGFLSIIAILCQ), 38-58 (LFLLDFVGNGLYLYCALHYCY), 82-102 (IPISSFLILKDFCVSCCCMMV), 118-138 (GISITSIIIISVFLVLGIFTY), 151-171 (GKFGVFYLEHINYLWVMANLL), 196-216 (FALISFLAESIDLLGRLVIPT), and 230-250 (FWVKLIQFVTLLVILCQVQYV).

The protein localises to the membrane. This is an uncharacterized protein from Saccharomyces cerevisiae (strain ATCC 204508 / S288c) (Baker's yeast).